The sequence spans 172 residues: Protein-export protein SecB (172 aa).

Residues 1-22 (MADETSADINNPALQPNGEDTS) form a disordered region. The segment covering 7 to 20 (ADINNPALQPNGED) has biased composition (polar residues).

It belongs to the SecB family. As to quaternary structure, homotetramer, a dimer of dimers. One homotetramer interacts with 1 SecA dimer.

The protein localises to the cytoplasm. Functionally, one of the proteins required for the normal export of preproteins out of the cell cytoplasm. It is a molecular chaperone that binds to a subset of precursor proteins, maintaining them in a translocation-competent state. It also specifically binds to its receptor SecA. This Sphingopyxis alaskensis (strain DSM 13593 / LMG 18877 / RB2256) (Sphingomonas alaskensis) protein is Protein-export protein SecB.